The chain runs to 56 residues: Protein hunchback (56 aa).

3 C2H2-type zinc fingers span residues 1 to 5 (HVRNH), 11 to 33 (HKCGKCNYSCVNKSMLNSHMKSH), and 39 to 56 (YRCADCTYATKYCHSLKL).

Belongs to the hunchback C2H2-type zinc-finger protein family.

The protein localises to the nucleus. Its function is as follows. Gap class segmentation protein that controls development of head structures. The chain is Protein hunchback (hb) from Bithynia tentaculata (Spire snail).